The sequence spans 374 residues: GDSL esterase/lipase 1 (374 aa).

Residues 1 to 25 (MENSQLVSITFLAYTIIISIGSINC) form the signal peptide. N-linked (GlcNAc...) asparagine glycosylation occurs at asparagine 34. Residue serine 44 is the Nucleophile of the active site. N-linked (GlcNAc...) asparagine glycosylation is found at asparagine 184, asparagine 203, and asparagine 330. Active-site charge relay system residues include aspartate 338 and histidine 341. Asparagine 360 carries N-linked (GlcNAc...) asparagine glycosylation.

It belongs to the 'GDSL' lipolytic enzyme family.

The protein resides in the secreted. Confers resistance to the necrotrophic fungus Alternaria brassicicola. Possesses lipase and antimicrobial activities that directly disrupt fungal spore integrity. Triggers systemic resistance, mostly by the ethylene-dependent pathway. This chain is GDSL esterase/lipase 1, found in Arabidopsis thaliana (Mouse-ear cress).